A 434-amino-acid chain; its full sequence is MEFSERKRSRKSQSFKLVSRDYHHEVYKISEFSNDVNGETKETQPIYLGDESMEIKKQITGMRRLLNDSTGRIYQRVGKEGEKLKQEPQVVDLVWPQRSNSSTEASQGLHSNSRGAWNELPTQSGQFSGQSGPRSRTFQTQPHISASSNGELPGVNSIVGSNCCTCNCQSTLQAILQELKTMRKLMQFQAVGTQNRQQPPISLMCSQRTAVSRKRNKKKKVLPKTVQPVTAVEPKPSPLETEKKPAASATRPPGLQAAERTSTEENHVLGFGIVLESPSSDPEVQLAEGFDVFMPKSQLDSILSNYTRSGSLLFRKLVCAFFDDKTLANSLPNGKRKRGFNDNRKGLDQNIVGAIKVFTENYCTANHVDKLPGPRDWVQILQDQIKLARRRLKRGSAEVADGDERLDRISLPPTGHTFVIKRETPEDPEPGSVA.

Residues K16, K56, and K85 each participate in a glycyl lysine isopeptide (Lys-Gly) (interchain with G-Cter in SUMO2) cross-link. Disordered stretches follow at residues 96–151 and 212–262; these read PQRS…SNGE and SRKR…ERTS. The segment covering 97-150 has biased composition (polar residues); sequence QRSNSSTEASQGLHSNSRGAWNELPTQSGQFSGQSGPRSRTFQTQPHISASSNG. Residues 212-222 show a composition bias toward basic residues; the sequence is SRKRNKKKKVL. K244 is covalently cross-linked (Glycyl lysine isopeptide (Lys-Gly) (interchain with G-Cter in SUMO2)). Residues 289–399 enclose the BEN domain; that stretch reads GFDVFMPKSQ…RRLKRGSAEV (111 aa). The residue at position 326 (T326) is a Phosphothreonine. S330 bears the Phosphoserine mark. A disordered region spans residues 414 to 434; sequence TGHTFVIKRETPEDPEPGSVA.

The protein is BEN domain-containing protein 7 (Bend7) of Mus musculus (Mouse).